The chain runs to 528 residues: Na(+)/H(+) antiporter NhaB (528 aa).

Residues 1–23 (MPISLGNAFIKNFLGKAPDWYKV) are Cytoplasmic-facing. A helical membrane pass occupies residues 24 to 46 (AIIAFLIINPIVFFLINPFVAGW). Topologically, residues 47 to 95 (LLVAEFIFTLAMALKCYPLQPGGLLAIEAIAIGMTSPAQVKHELVANIE) are periplasmic. A helical membrane pass occupies residues 96-118 (VLLLLVFMVAGIYFMKHLLLFIF). Residues 119-129 (TKILLGIRSKT) lie on the Cytoplasmic side of the membrane. Residues 130 to 163 (LLSLAFCFAAAFLSAFLDALTVIAVVISVAIGFY) form a helical membrane-spanning segment. Topologically, residues 164 to 239 (SIYHKVASGN…ADQAGWLFGE (76 aa)) are periplasmic. A helical transmembrane segment spans residues 240–262 (FLIRMSPVTLPVFFCGLITCALV). At 263 to 297 (EKLKVFGYGAKLPNNVRQILVDFDNEERKTRTNQD) the chain is on the cytoplasmic side. The helical transmembrane segment at 298 to 317 (VAKLWVQGLIAVWLIVALAL) threads the bilayer. At 318–320 (HLA) the chain is on the periplasmic side. A helical membrane pass occupies residues 321-340 (AVGLIGLSVIILATAFTGVI). Over 341-352 (EEHSMGKAFEEA) the chain is Cytoplasmic. Residues 353 to 375 (LPFTALLAVFFSIVAVIIDQELF) traverse the membrane as a helical segment. Over 376 to 389 (KPVIDAVLAVEDKG) the chain is Periplasmic. The helical transmembrane segment at 390–412 (TQLALFYVANGLLSMVSDNVFVG) threads the bilayer. The Cytoplasmic portion of the chain corresponds to 413–477 (TVYINEVKTA…PLIRLSYGRM (65 aa)). Residues 478–500 (VIMALPYTIVLAIVGLMGIMFFL) form a helical membrane-spanning segment. The Periplasmic portion of the chain corresponds to 501 to 528 (EPATASFYDAGWILPHSGDLTPVVSGGH).

This sequence belongs to the NhaB Na(+)/H(+) (TC 2.A.34) antiporter family.

The protein resides in the cell inner membrane. It catalyses the reaction 2 Na(+)(in) + 3 H(+)(out) = 2 Na(+)(out) + 3 H(+)(in). Its function is as follows. Na(+)/H(+) antiporter that extrudes sodium in exchange for external protons. This Vibrio alginolyticus protein is Na(+)/H(+) antiporter NhaB.